We begin with the raw amino-acid sequence, 962 residues long: Integrator complex subunit 7 (962 aa).

Phosphoserine is present on residues Ser-338 and Ser-809.

This sequence belongs to the Integrator subunit 7 family. In terms of assembly, component of the Integrator complex, composed of core subunits INTS1, INTS2, INTS3, INTS4, INTS5, INTS6, INTS7, INTS8, INTS9/RC74, INTS10, INTS11/CPSF3L, INTS12, INTS13, INTS14 and INTS15. The core complex associates with protein phosphatase 2A subunits PPP2CA and PPP2R1A, to form the Integrator-PP2A (INTAC) complex. Interacts with NABP2.

It is found in the nucleus. Its subcellular location is the chromosome. The protein resides in the cytoplasm. Its function is as follows. Component of the integrator complex, a multiprotein complex that terminates RNA polymerase II (Pol II) transcription in the promoter-proximal region of genes. The integrator complex provides a quality checkpoint during transcription elongation by driving premature transcription termination of transcripts that are unfavorably configured for transcriptional elongation: the complex terminates transcription by (1) catalyzing dephosphorylation of the C-terminal domain (CTD) of Pol II subunit POLR2A/RPB1 and SUPT5H/SPT5, (2) degrading the exiting nascent RNA transcript via endonuclease activity and (3) promoting the release of Pol II from bound DNA. The integrator complex is also involved in terminating the synthesis of non-coding Pol II transcripts, such as enhancer RNAs (eRNAs), small nuclear RNAs (snRNAs), telomerase RNAs and long non-coding RNAs (lncRNAs). May be not involved in the recruitment of cytoplasmic dynein to the nuclear envelope by different components of the INT complex. Plays a role in DNA damage response (DDR) signaling during the S phase. The sequence is that of Integrator complex subunit 7 from Homo sapiens (Human).